A 152-amino-acid chain; its full sequence is Membrane-spanning 4-domains subfamily A member 13 (152 aa).

4 helical membrane passes run 1–21, 32–52, 66–86, and 111–131; these read MIGI…MGQI, TYKT…VFLI, TLII…LTII, and ILLF…IYSC.

Belongs to the MS4A family.

The protein localises to the membrane. In terms of biological role, may be involved in signal transduction as a component of a multimeric receptor complex. The protein is Membrane-spanning 4-domains subfamily A member 13 (MS4A13) of Homo sapiens (Human).